A 278-amino-acid polypeptide reads, in one-letter code: HTH-type transcriptional activator RhaS (278 aa).

The 99-residue stretch at 174 to 272 (NHLIAWLEDH…GWSPREIRQG (99 aa)) folds into the HTH araC/xylS-type domain. DNA-binding regions (H-T-H motif) lie at residues 191–212 (EAIA…KQHT) and 239–262 (VTHI…RREF).

In terms of assembly, binds DNA as a dimer.

It is found in the cytoplasm. In terms of biological role, activates expression of the rhaBAD and rhaT operons. The polypeptide is HTH-type transcriptional activator RhaS (Escherichia fergusonii (strain ATCC 35469 / DSM 13698 / CCUG 18766 / IAM 14443 / JCM 21226 / LMG 7866 / NBRC 102419 / NCTC 12128 / CDC 0568-73)).